Here is a 149-residue protein sequence, read N- to C-terminus: Calmodulin-like protein 3 (149 aa).

EF-hand domains are found at residues 8–43 (EQIA…LGQN), 44–79 (PTEA…KMKD), 81–116 (DSEE…LGEK), and 117–149 (LSDE…LVSK). Ca(2+) is bound by residues Asp-21, Asp-23, Asp-25, Ser-27, Glu-32, Asp-57, Asp-59, Asn-61, Thr-63, Glu-68, Asp-94, Asp-96, Asn-98, Glu-105, Asp-130, Asp-132, Asp-134, Gln-136, and Glu-141.

The protein belongs to the calmodulin family. In terms of assembly, interacts with MYO10, the interaction is calcium-dependent and essential for MYO10 function in filopodial extension.

May function as a specific light chain of unconventional myosin-10 (MYO10), also enhances MYO10 translation, possibly by acting as a chaperone for the emerging MYO10 heavy chain protein. May compete with calmodulin by binding, with different affinities, to cellular substrates. This chain is Calmodulin-like protein 3 (Calml3), found in Mus musculus (Mouse).